Consider the following 211-residue polypeptide: 2,3-bisphosphoglycerate-dependent phosphoglycerate mutase (211 aa).

Substrate contacts are provided by residues 9–16, 22–23, Arg-61, 88–91, Lys-99, 115–116, and 159–160; these read RHGQSDWN, TG, ERDY, RR, and GN. Catalysis depends on His-10, which acts as the Tele-phosphohistidine intermediate. Residue Glu-88 is the Proton donor/acceptor of the active site.

This sequence belongs to the phosphoglycerate mutase family. BPG-dependent PGAM subfamily. Homodimer.

The catalysed reaction is (2R)-2-phosphoglycerate = (2R)-3-phosphoglycerate. It functions in the pathway carbohydrate degradation; glycolysis; pyruvate from D-glyceraldehyde 3-phosphate: step 3/5. In terms of biological role, catalyzes the interconversion of 2-phosphoglycerate and 3-phosphoglycerate. The polypeptide is 2,3-bisphosphoglycerate-dependent phosphoglycerate mutase (Rhizobium meliloti (strain 1021) (Ensifer meliloti)).